A 373-amino-acid chain; its full sequence is MSFEKLGEDGKARRGRLTFPRGVVETPAFMPVGTYGTVKGMLPRDIEEIGAHIILGNTFHLMLRPGTEVVKAHGDLHDFTQWQGPILTDSGGFQVFSLGEMRKITEQGVTFRSPVDGSKVELSPEIAIQVQRDLGSDIVMIFDECTPYPATEKQAKESMELSLRWAERSKRAHEGNPAALFGIVQGGMYESLRDQSLEGLEKIGFDGYAIGGLSVGEPKEDMIRILDHLPPKMPEDKPRYLMGVGRPEDIVEAVRRGVDMFDCVMPTRNARNGYLFTSAGIVKIRNAKNRHDTGPLDERCDCYTCKHFSKSYLHHLDKCGEMLGSQLNTIHNLRFYQNLMSGLRGAIEAGTLSDFVSEFYALRGETVPPLGDS.

Residue D89 is the Proton acceptor of the active site. Residues 89 to 93 (DSGGF), D143, Q185, and G212 contribute to the substrate site. Residues 243–249 (GVGRPED) form an RNA binding region. D262 (nucleophile) is an active-site residue. An RNA binding; important for wobble base 34 recognition region spans residues 267 to 271 (TRNAR). Zn(2+)-binding residues include C300, C302, C305, and H331.

The protein belongs to the queuine tRNA-ribosyltransferase family. As to quaternary structure, homodimer. Within each dimer, one monomer is responsible for RNA recognition and catalysis, while the other monomer binds to the replacement base PreQ1. Zn(2+) is required as a cofactor.

It carries out the reaction 7-aminomethyl-7-carbaguanine + guanosine(34) in tRNA = 7-aminomethyl-7-carbaguanosine(34) in tRNA + guanine. The protein operates within tRNA modification; tRNA-queuosine biosynthesis. In terms of biological role, catalyzes the base-exchange of a guanine (G) residue with the queuine precursor 7-aminomethyl-7-deazaguanine (PreQ1) at position 34 (anticodon wobble position) in tRNAs with GU(N) anticodons (tRNA-Asp, -Asn, -His and -Tyr). Catalysis occurs through a double-displacement mechanism. The nucleophile active site attacks the C1' of nucleotide 34 to detach the guanine base from the RNA, forming a covalent enzyme-RNA intermediate. The proton acceptor active site deprotonates the incoming PreQ1, allowing a nucleophilic attack on the C1' of the ribose to form the product. After dissociation, two additional enzymatic reactions on the tRNA convert PreQ1 to queuine (Q), resulting in the hypermodified nucleoside queuosine (7-(((4,5-cis-dihydroxy-2-cyclopenten-1-yl)amino)methyl)-7-deazaguanosine). In Marinobacter nauticus (strain ATCC 700491 / DSM 11845 / VT8) (Marinobacter aquaeolei), this protein is Queuine tRNA-ribosyltransferase.